A 159-amino-acid chain; its full sequence is CASP-like protein 5C1 (159 aa).

Topologically, residues 1–6 are cytoplasmic; the sequence is MDNGDR. Residues 7 to 29 form a helical membrane-spanning segment; it reads SGAGAGAVGSAGSLGLRVGQAVF. Residues 30–48 are Extracellular-facing; sequence SSASLLFMSVGVEFFSYTA. The helical transmembrane segment at 49-69 threads the bilayer; that stretch reads FCFLVTIMGLVIPWSCTLAMI. At 70–94 the chain is on the cytoplasmic side; the sequence is DVYSVFVGCPLRVPGVMVIVVVGDC. The chain crosses the membrane as a helical span at residues 95-117; it reads ALSIVSFAAACSSAAVIDLLLQL. Residues 118 to 134 are Extracellular-facing; the sequence is HGSHSSPTFCGRYQLSA. The chain crosses the membrane as a helical span at residues 135 to 155; it reads MMAFLSWLLMAASATFNLWFV. At 156 to 159 the chain is on the cytoplasmic side; it reads ASRW.

It belongs to the Casparian strip membrane proteins (CASP) family. Homodimer and heterodimers.

The protein resides in the cell membrane. This Zea mays (Maize) protein is CASP-like protein 5C1.